We begin with the raw amino-acid sequence, 454 residues long: F-box protein At1g67130 (454 aa).

Residues 4–53 enclose the F-box domain; it reads GETLDSIPTDLILDILSRLPTKSIARFHCVSKLWSSMLASQDFTRLFVNR.

The chain is F-box protein At1g67130 from Arabidopsis thaliana (Mouse-ear cress).